The following is a 148-amino-acid chain: MDVILLEKVPNLGSLGDKVSVRPGYGRNFLIPKGKAVAATAAKLAEFEQRRAELEKKASEELAAAQARAEAVARLNVSIAQKAGEEGKLYGSVGTKDIAEAVTAAGVPVERHEVRLPHGPIRLAGDYEITLHLHSDVNATLNLKVIGE.

This sequence belongs to the bacterial ribosomal protein bL9 family.

In terms of biological role, binds to the 23S rRNA. The polypeptide is Large ribosomal subunit protein bL9 (Methylococcus capsulatus (strain ATCC 33009 / NCIMB 11132 / Bath)).